The following is a 207-amino-acid chain: Outer-membrane lipoprotein LolB (207 aa).

A signal peptide spans 1–21; it reads MTLPDFRLIRLLPLASLVLTA. The N-palmitoyl cysteine moiety is linked to residue Cys-22. The S-diacylglycerol cysteine moiety is linked to residue Cys-22.

The protein belongs to the LolB family. In terms of assembly, monomer.

It localises to the cell outer membrane. Functionally, plays a critical role in the incorporation of lipoproteins in the outer membrane after they are released by the LolA protein. This chain is Outer-membrane lipoprotein LolB, found in Salmonella agona (strain SL483).